The primary structure comprises 347 residues: Holliday junction branch migration complex subunit RuvB (347 aa).

The segment at M1–Y180 is large ATPase domain (RuvB-L). ATP contacts are provided by residues L19, R20, G61, K64, T65, T66, E127–F129, R170, Y180, and R217. T65 is a binding site for Mg(2+). Residues E181–E251 are small ATPAse domain (RuvB-S). Positions R254–E347 are head domain (RuvB-H). DNA contacts are provided by R290, R309, and R314.

It belongs to the RuvB family. In terms of assembly, homohexamer. Forms an RuvA(8)-RuvB(12)-Holliday junction (HJ) complex. HJ DNA is sandwiched between 2 RuvA tetramers; dsDNA enters through RuvA and exits via RuvB. An RuvB hexamer assembles on each DNA strand where it exits the tetramer. Each RuvB hexamer is contacted by two RuvA subunits (via domain III) on 2 adjacent RuvB subunits; this complex drives branch migration. In the full resolvosome a probable DNA-RuvA(4)-RuvB(12)-RuvC(2) complex forms which resolves the HJ.

The protein resides in the cytoplasm. The enzyme catalyses ATP + H2O = ADP + phosphate + H(+). Functionally, the RuvA-RuvB-RuvC complex processes Holliday junction (HJ) DNA during genetic recombination and DNA repair, while the RuvA-RuvB complex plays an important role in the rescue of blocked DNA replication forks via replication fork reversal (RFR). RuvA specifically binds to HJ cruciform DNA, conferring on it an open structure. The RuvB hexamer acts as an ATP-dependent pump, pulling dsDNA into and through the RuvAB complex. RuvB forms 2 homohexamers on either side of HJ DNA bound by 1 or 2 RuvA tetramers; 4 subunits per hexamer contact DNA at a time. Coordinated motions by a converter formed by DNA-disengaged RuvB subunits stimulates ATP hydrolysis and nucleotide exchange. Immobilization of the converter enables RuvB to convert the ATP-contained energy into a lever motion, pulling 2 nucleotides of DNA out of the RuvA tetramer per ATP hydrolyzed, thus driving DNA branch migration. The RuvB motors rotate together with the DNA substrate, which together with the progressing nucleotide cycle form the mechanistic basis for DNA recombination by continuous HJ branch migration. Branch migration allows RuvC to scan DNA until it finds its consensus sequence, where it cleaves and resolves cruciform DNA. The sequence is that of Holliday junction branch migration complex subunit RuvB from Paramagnetospirillum magneticum (strain ATCC 700264 / AMB-1) (Magnetospirillum magneticum).